The primary structure comprises 146 residues: Putative pre-16S rRNA nuclease (146 aa).

The protein belongs to the YqgF nuclease family.

It localises to the cytoplasm. Its function is as follows. Could be a nuclease involved in processing of the 5'-end of pre-16S rRNA. This Pseudomonas syringae pv. syringae (strain B728a) protein is Putative pre-16S rRNA nuclease.